The primary structure comprises 204 residues: UPF0637 protein SAB0972c (204 aa).

This sequence belongs to the UPF0637 family.

The protein is UPF0637 protein SAB0972c of Staphylococcus aureus (strain bovine RF122 / ET3-1).